A 679-amino-acid polypeptide reads, in one-letter code: Penicillin-binding protein PbpB (679 aa).

The tract at residues 1 to 74 (MSRAAPRRAS…STRARRTRQV (74 aa)) is disordered. The Cytoplasmic segment spans residues 1–90 (MSRAAPRRAS…GASFVFRHRT (90 aa)). The span at 42–54 (ARQAQEATKSRPA) shows a compositional bias: polar residues. A helical membrane pass occupies residues 91–111 (GNAVILVLMLVAATQLFFLQV). At 112-679 (SHAAGLRAQA…PGPPLVLQAT (568 aa)) the chain is on the extracellular side. Ser-386 (acyl-ester intermediate) is an active-site residue.

It belongs to the transpeptidase family. As to quaternary structure, interacts with Wag31. Cleaved by Rip1 in response to oxidative stress (H(2)O(2)), prevented by Wag31. Cleavage probably occurs near residues 102-103.

It is found in the cell membrane. It functions in the pathway cell wall biogenesis; peptidoglycan biosynthesis. Synthesis of cross-linked peptidoglycan from the lipid intermediates. This chain is Penicillin-binding protein PbpB (pbpB), found in Mycobacterium tuberculosis (strain ATCC 25618 / H37Rv).